Here is a 281-residue protein sequence, read N- to C-terminus: CDAN1-interacting nuclease 1 (281 aa).

Position 114 is a phosphothreonine (Thr114).

Its subcellular location is the nucleus. The protein localises to the cytoplasm. Functionally, plays a role in erythroid cell differentiation. The polypeptide is CDAN1-interacting nuclease 1 (Mus musculus (Mouse)).